The primary structure comprises 310 residues: Olfactory receptor 5P80 (310 aa).

The Extracellular portion of the chain corresponds to 1–25 (MEPGNYTVVTEVILLGFTEDAIIRA). N-linked (GlcNAc...) asparagine glycosylation occurs at asparagine 5. Residues 26-46 (ILFIVFLIIYSVTLMGNASII) form a helical membrane-spanning segment. At 47-54 (MLIRRSPQ) the chain is on the cytoplasmic side. The helical transmembrane segment at 55-75 (LHTPMYLLLSHLAFVDIGYSS) threads the bilayer. Residues 76 to 99 (SVTPIMLKGFLRKETFILVSGCVA) lie on the Extracellular side of the membrane. A disulfide bridge links cysteine 97 with cysteine 189. A helical membrane pass occupies residues 100–120 (QLCSVVTFGSTECFLLAAMAY). Over 121–133 (DRYVAICSPLLYA) the chain is Cytoplasmic. Residues 134–154 (TQMSSTVCILLVGASYLGGCV) form a helical membrane-spanning segment. Residues 155-196 (NAWTFTGCLLNLSFCRPNKVNHFFCDYSPLLKISCSHDFSSE) are Extracellular-facing. An N-linked (GlcNAc...) asparagine glycan is attached at asparagine 165. The helical transmembrane segment at 197–217 (VIPAISSGSIIVVTVFIIALS) threads the bilayer. The Cytoplasmic segment spans residues 218 to 237 (YVYILVSILKMRSTEGRQKA). A helical transmembrane segment spans residues 238–258 (FSTCTSHLTAVTLFYGTITFI). At 259–271 (YVMPKSSYSTDQN) the chain is on the extracellular side. The chain crosses the membrane as a helical span at residues 272–292 (KVVSVFYTVVIPMLNPIIYSL). Residues 293–310 (RNKDVKEAMKKLMANTHH) lie on the Cytoplasmic side of the membrane.

This sequence belongs to the G-protein coupled receptor 1 family.

Its subcellular location is the cell membrane. Potential odorant receptor. The polypeptide is Olfactory receptor 5P80 (Mus musculus (Mouse)).